The following is a 462-amino-acid chain: MKLYNTLTRKKEEFKPIKEKNVGIYVCGPTVYNYIHVGNARPIVVFDTLRRYFIYKGYNVKFVSNFTDIDDKIINKAKDENIDFREITKKYIQAYLDNVSGLNFDEDDTIHPKATEYIDEMIKFVKTLEDKGAAYNVDGNVYFDITKAKDYGKLSKKNIDDLRAGARIDVNSEKKNPMDFALWKKRKEESEPAWESPWGMGRPGWHLECSVMSKTILGDTIDIHAGGEDLQFPHHENEIAQSETCTGAHFANYWLHNSMITVDKEKMSKSKNNFFLLKDIEKEFDLEVIRLWLLSVHYRNPIDFSHDTLVATKNSLDRLYTAKKFLNRILENSSEKEEKDDNIKTFREKFEQAMDDDINTADAISVLFDFIKYINKNYDENTSKNILLDAKKLMDDISYVLGILFKEDDDDLDSEIEELIEQRNAARKEKDFKKADEIRDKLLSMGIVLKDTRDGVIWERSN.

C27 is a binding site for Zn(2+). Positions 29-39 (PTVYNYIHVGN) match the 'HIGH' region motif. Residues C209, H234, and E238 each coordinate Zn(2+). Positions 266 to 270 (KMSKS) match the 'KMSKS' region motif. An ATP-binding site is contributed by K269.

The protein belongs to the class-I aminoacyl-tRNA synthetase family. In terms of assembly, monomer. Zn(2+) serves as cofactor.

It localises to the cytoplasm. It carries out the reaction tRNA(Cys) + L-cysteine + ATP = L-cysteinyl-tRNA(Cys) + AMP + diphosphate. The polypeptide is Cysteine--tRNA ligase (Finegoldia magna (strain ATCC 29328 / DSM 20472 / WAL 2508) (Peptostreptococcus magnus)).